We begin with the raw amino-acid sequence, 343 residues long: Phosphoribosylformylglycinamidine cyclo-ligase (343 aa).

Belongs to the AIR synthase family.

The protein resides in the cytoplasm. The catalysed reaction is 2-formamido-N(1)-(5-O-phospho-beta-D-ribosyl)acetamidine + ATP = 5-amino-1-(5-phospho-beta-D-ribosyl)imidazole + ADP + phosphate + H(+). It functions in the pathway purine metabolism; IMP biosynthesis via de novo pathway; 5-amino-1-(5-phospho-D-ribosyl)imidazole from N(2)-formyl-N(1)-(5-phospho-D-ribosyl)glycinamide: step 2/2. This Thermodesulfovibrio yellowstonii (strain ATCC 51303 / DSM 11347 / YP87) protein is Phosphoribosylformylglycinamidine cyclo-ligase.